The sequence spans 366 residues: Flagellar P-ring protein (366 aa).

The first 23 residues, 1 to 23 (MRTLKIFALAVSLLSMLAAPVQA), serve as a signal peptide directing secretion.

Belongs to the FlgI family. As to quaternary structure, the basal body constitutes a major portion of the flagellar organelle and consists of four rings (L,P,S, and M) mounted on a central rod.

The protein resides in the periplasm. It localises to the bacterial flagellum basal body. Assembles around the rod to form the L-ring and probably protects the motor/basal body from shearing forces during rotation. The sequence is that of Flagellar P-ring protein from Idiomarina loihiensis (strain ATCC BAA-735 / DSM 15497 / L2-TR).